The primary structure comprises 519 residues: Glutamate--cysteine ligase (519 aa).

The protein belongs to the glutamate--cysteine ligase type 1 family. Type 1 subfamily.

The catalysed reaction is L-cysteine + L-glutamate + ATP = gamma-L-glutamyl-L-cysteine + ADP + phosphate + H(+). The protein operates within sulfur metabolism; glutathione biosynthesis; glutathione from L-cysteine and L-glutamate: step 1/2. The sequence is that of Glutamate--cysteine ligase from Erwinia tasmaniensis (strain DSM 17950 / CFBP 7177 / CIP 109463 / NCPPB 4357 / Et1/99).